Here is a 306-residue protein sequence, read N- to C-terminus: Latrophilin receptor-like protein A (306 aa).

At 1 to 15 the chain is on the extracellular side; it reads MPSQLLNTVLSYLTD. A helical transmembrane segment spans residues 16-36; that stretch reads ILLSLSIVGSFLTIFTFMLYP. Residues 37 to 41 are Cytoplasmic-facing; sequence KLRSY. Residues 42–62 form a helical membrane-spanning segment; that stretch reads PIKLIIYLCMSIVFSLFFFEI. Over 63-70 the chain is Extracellular; the sequence is SFRSSNSL. The helical transmembrane segment at 71-91 threads the bilayer; the sequence is FCIPAAILVHYFFLANFFWTF. Residues 92–113 lie on the Cytoplasmic side of the membrane; it reads SVSFNFFQMIVKRNRDSEFYER. A helical membrane pass occupies residues 114–134; that stretch reads YYHLISWGIPFIIIIFCAAFK. Over 135–152 the chain is Extracellular; that stretch reads KYVDRGGFCYLEDQYSVY. Residues 153-173 traverse the membrane as a helical segment; the sequence is FGFFMPGVIIVCSNICIYVFV. The Cytoplasmic portion of the chain corresponds to 174–196; the sequence is AKEIYKTLRHTPTQKRQTVKEFR. The chain crosses the membrane as a helical span at residues 197 to 217; the sequence is VYFSIFVSIGSSWIFGFIYMF. Residues 218 to 222 are Extracellular-facing; sequence SDSNS. A helical membrane pass occupies residues 223–243; it reads IIGYIFLILFSISTSLQGFFI. Residues 244–306 lie on the Cytoplasmic side of the membrane; the sequence is FISYCLNYKV…TTTTTNVYSA (63 aa). Positions 279-306 are disordered; that stretch reads TTQSGPTGTTDSSSTMTSTTTTTNVYSA.

The protein belongs to the G-protein coupled receptor 2 family. LN-TM7 subfamily.

It is found in the membrane. The polypeptide is Latrophilin receptor-like protein A (lrlA) (Dictyostelium discoideum (Social amoeba)).